Reading from the N-terminus, the 548-residue chain is Probable nuclear hormone receptor HR3 (548 aa).

The interval 1 to 27 (MNNNQFHELFGSQWPPDQHGGHSSAST) is disordered. The nuclear receptor DNA-binding region spans 101-176 (IIPCKVCGDK…LGMSRDAVKF (76 aa)). 2 consecutive NR C4-type zinc fingers follow at residues 104 to 124 (CKVC…CEGC) and 140 to 164 (CPRN…LQKC). Positions 198–228 (MRAQNDAAPDSVYDAQQQTPSSSDQFHGHYN) are disordered. Residues 211 to 222 (DAQQQTPSSSDQ) show a composition bias toward polar residues. An NR LBD domain is found at 295-539 (ISKVLVKSLA…PALYKELFSL (245 aa)).

It belongs to the nuclear hormone receptor family. NR1 subfamily.

It is found in the nucleus. Putative receptor whose ligand is not yet known. This is Probable nuclear hormone receptor HR3 (HR3) from Manduca sexta (Tobacco hawkmoth).